Reading from the N-terminus, the 264-residue chain is Thiazole synthase (264 aa).

Lys-106 functions as the Schiff-base intermediate with DXP in the catalytic mechanism. Residues Gly-167, Ala-193–Gly-194, and Asn-215–Ser-216 each bind 1-deoxy-D-xylulose 5-phosphate.

This sequence belongs to the ThiG family. In terms of assembly, homotetramer. Forms heterodimers with either ThiH or ThiS.

Its subcellular location is the cytoplasm. It catalyses the reaction [ThiS sulfur-carrier protein]-C-terminal-Gly-aminoethanethioate + 2-iminoacetate + 1-deoxy-D-xylulose 5-phosphate = [ThiS sulfur-carrier protein]-C-terminal Gly-Gly + 2-[(2R,5Z)-2-carboxy-4-methylthiazol-5(2H)-ylidene]ethyl phosphate + 2 H2O + H(+). Its pathway is cofactor biosynthesis; thiamine diphosphate biosynthesis. Functionally, catalyzes the rearrangement of 1-deoxy-D-xylulose 5-phosphate (DXP) to produce the thiazole phosphate moiety of thiamine. Sulfur is provided by the thiocarboxylate moiety of the carrier protein ThiS. In vitro, sulfur can be provided by H(2)S. The sequence is that of Thiazole synthase from Prochlorococcus marinus (strain MIT 9215).